The chain runs to 142 residues: Large ribosomal subunit protein uL22c (142 aa).

This sequence belongs to the universal ribosomal protein uL22 family. Part of the 50S ribosomal subunit.

It is found in the plastid. The protein localises to the chloroplast. Its function is as follows. This protein binds specifically to 23S rRNA. Functionally, the globular domain of the protein is located near the polypeptide exit tunnel on the outside of the subunit, while an extended beta-hairpin is found that lines the wall of the exit tunnel in the center of the 70S ribosome. This is Large ribosomal subunit protein uL22c (rpl22) from Picea abies (Norway spruce).